The primary structure comprises 331 residues: METVISSDSSPAVENEHPQETPESNNSVYTSFMKSHRCYDLIPTSSKLVVFDTSLQVKKAFFALVTNGVRAAPLWDSKKQSFVGMLTITDFINILHRYYKSALVQIYELEEHKIETWREVYLQDSFKPLVCISPNASLFDAVSSLIRNKIHRLPVIDPESGNTLYILTHKRILKFLKLFITEFPKPEFMSKSLEELQIGTYANIAMVRTTTPVYVALGIFVQHRVSALPVVDEKGRVVDIYSKFDVINLAAEKTYNNLDVSVTKALQHRSHYFEGVLKCYLHETLETIINRLVEAEVHRLVVVDENDVVKGIVSLSDILQALVLTGGEKKP.

Residues 1–12 (METVISSDSSPA) are compositionally biased toward polar residues. The interval 1-26 (METVISSDSSPAVENEHPQETPESNN) is disordered. 3 consecutive CBS domains span residues 43–103 (PTSS…KSAL), 125–187 (SFKP…PKPE), and 198–260 (IGTY…NLDV). Residues R70, 85–90 (MLTITD), V130, 151–152 (HR), and K170 each bind ADP. AMP is bound by residues R70, 85-90 (MLTITD), V130, H151, 151-152 (HR), K170, T200, A205, 226-227 (SA), and 242-245 (SKFD). ATP is bound by residues R70, 85-90 (MLTITD), V130, 151-152 (HR), R152, and K170. The short motif at 138-159 (LFDAVSSLIRNKIHRLPVIDPE) is the AMPK pseudosubstrate element. 242 to 245 (SKFD) contributes to the ADP binding site. 242–245 (SKFD) contributes to the ATP binding site. Position 261 is a phosphoserine; by ULK1 (S261). At T263 the chain carries Phosphothreonine; by ULK1. Residue R269 participates in ADP binding. R269 contacts AMP. Position 269 (R269) interacts with ATP. Position 270 is a phosphoserine; by ULK1 (S270). Residues 272 to 329 (YFEGVLKCYLHETLETIINRLVEAEVHRLVVVDENDVVKGIVSLSDILQALVLTGGEK) enclose the CBS 4 domain. ADP contacts are provided by residues L277 and 298–299 (HR). AMP-binding positions include L277, H298, 298–299 (HR), and 314–317 (SLSD). Residues L277 and 298–299 (HR) each bind ATP.

Belongs to the 5'-AMP-activated protein kinase gamma subunit family. AMPK is a heterotrimer of an alpha catalytic subunit (PRKAA1 or PRKAA2), a beta (PRKAB1 or PRKAB2) and a gamma non-catalytic subunits (PRKAG1, PRKAG2 or PRKAG3). Interacts with FNIP1 and FNIP2. Post-translationally, phosphorylated by ULK1 and ULK2; leading to negatively regulate AMPK activity and suggesting the existence of a regulatory feedback loop between ULK1, ULK2 and AMPK. Glycosylated; O-GlcNAcylated by OGT, promoting the AMP-activated protein kinase (AMPK) activity.

In terms of biological role, AMP/ATP-binding subunit of AMP-activated protein kinase (AMPK), an energy sensor protein kinase that plays a key role in regulating cellular energy metabolism. In response to reduction of intracellular ATP levels, AMPK activates energy-producing pathways and inhibits energy-consuming processes: inhibits protein, carbohydrate and lipid biosynthesis, as well as cell growth and proliferation. AMPK acts via direct phosphorylation of metabolic enzymes, and by longer-term effects via phosphorylation of transcription regulators. Also acts as a regulator of cellular polarity by remodeling the actin cytoskeleton; probably by indirectly activating myosin. Gamma non-catalytic subunit mediates binding to AMP, ADP and ATP, leading to activate or inhibit AMPK: AMP-binding results in allosteric activation of alpha catalytic subunit (PRKAA1 or PRKAA2) both by inducing phosphorylation and preventing dephosphorylation of catalytic subunits. ADP also stimulates phosphorylation, without stimulating already phosphorylated catalytic subunit. ATP promotes dephosphorylation of catalytic subunit, rendering the AMPK enzyme inactive. This Homo sapiens (Human) protein is 5'-AMP-activated protein kinase subunit gamma-1 (PRKAG1).